Consider the following 270-residue polypeptide: 3-methyl-2-oxobutanoate hydroxymethyltransferase (270 aa).

Residues D48 and D87 each contribute to the Mg(2+) site. 3-methyl-2-oxobutanoate-binding positions include 48–49 (DS), D87, and K117. Residue E119 participates in Mg(2+) binding. The active-site Proton acceptor is E186.

It belongs to the PanB family. In terms of assembly, homodecamer; pentamer of dimers. It depends on Mg(2+) as a cofactor.

The protein resides in the cytoplasm. It carries out the reaction 3-methyl-2-oxobutanoate + (6R)-5,10-methylene-5,6,7,8-tetrahydrofolate + H2O = 2-dehydropantoate + (6S)-5,6,7,8-tetrahydrofolate. It functions in the pathway cofactor biosynthesis; (R)-pantothenate biosynthesis; (R)-pantoate from 3-methyl-2-oxobutanoate: step 1/2. Catalyzes the reversible reaction in which hydroxymethyl group from 5,10-methylenetetrahydrofolate is transferred onto alpha-ketoisovalerate to form ketopantoate. This chain is 3-methyl-2-oxobutanoate hydroxymethyltransferase, found in Synechococcus sp. (strain RCC307).